Here is a 393-residue protein sequence, read N- to C-terminus: CCA-adding enzyme (393 aa).

Glycine 27 and arginine 30 together coordinate ATP. CTP-binding residues include glycine 27 and arginine 30. Mg(2+)-binding residues include aspartate 40 and aspartate 42. Arginine 111, aspartate 154, arginine 157, arginine 160, and arginine 163 together coordinate ATP. Positions 111, 154, 157, 160, and 163 each coordinate CTP.

Belongs to the tRNA nucleotidyltransferase/poly(A) polymerase family. Bacterial CCA-adding enzyme type 3 subfamily. Homodimer. It depends on Mg(2+) as a cofactor.

It carries out the reaction a tRNA precursor + 2 CTP + ATP = a tRNA with a 3' CCA end + 3 diphosphate. It catalyses the reaction a tRNA with a 3' CCA end + 2 CTP + ATP = a tRNA with a 3' CCACCA end + 3 diphosphate. Catalyzes the addition and repair of the essential 3'-terminal CCA sequence in tRNAs without using a nucleic acid template. Adds these three nucleotides in the order of C, C, and A to the tRNA nucleotide-73, using CTP and ATP as substrates and producing inorganic pyrophosphate. tRNA 3'-terminal CCA addition is required both for tRNA processing and repair. Also involved in tRNA surveillance by mediating tandem CCA addition to generate a CCACCA at the 3' terminus of unstable tRNAs. While stable tRNAs receive only 3'-terminal CCA, unstable tRNAs are marked with CCACCA and rapidly degraded. The chain is CCA-adding enzyme from Listeria monocytogenes serotype 4b (strain F2365).